We begin with the raw amino-acid sequence, 196 residues long: Nucleoside triphosphate pyrophosphatase (196 aa).

Aspartate 72 acts as the Proton acceptor in catalysis.

It belongs to the Maf family. Requires a divalent metal cation as cofactor.

The protein localises to the cytoplasm. The catalysed reaction is a ribonucleoside 5'-triphosphate + H2O = a ribonucleoside 5'-phosphate + diphosphate + H(+). It carries out the reaction a 2'-deoxyribonucleoside 5'-triphosphate + H2O = a 2'-deoxyribonucleoside 5'-phosphate + diphosphate + H(+). In terms of biological role, nucleoside triphosphate pyrophosphatase. May have a dual role in cell division arrest and in preventing the incorporation of modified nucleotides into cellular nucleic acids. This is Nucleoside triphosphate pyrophosphatase from Chlamydia muridarum (strain MoPn / Nigg).